The following is a 211-amino-acid chain: Large ribosomal subunit protein uL4 (211 aa).

Positions 40–87 (QQAHTRQGTASTLTRSEVRGGGRKPYKQKGTGRARQGSIRTPLRPGGG) are disordered. Residues 41–54 (QAHTRQGTASTLTR) show a composition bias toward polar residues. Residues 60–71 (GGRKPYKQKGTG) show a composition bias toward basic residues.

The protein belongs to the universal ribosomal protein uL4 family. Part of the 50S ribosomal subunit.

Functionally, one of the primary rRNA binding proteins, this protein initially binds near the 5'-end of the 23S rRNA. It is important during the early stages of 50S assembly. It makes multiple contacts with different domains of the 23S rRNA in the assembled 50S subunit and ribosome. In terms of biological role, forms part of the polypeptide exit tunnel. This is Large ribosomal subunit protein uL4 from Synechococcus sp. (strain WH7803).